A 293-amino-acid polypeptide reads, in one-letter code: Glutamyl-Q tRNA(Asp) synthetase (293 aa).

Residues Arg-8–Thr-12 and Glu-44 each bind L-glutamate. The 'HIGH' region motif lies at Pro-11–Ser-21. Residues Cys-100, Cys-102, Tyr-114, and Cys-118 each coordinate Zn(2+). L-glutamate-binding residues include Tyr-171 and Arg-189. A 'KMSKS' region motif is present at residues Lys-227–Ser-231. Residue Lys-230 coordinates ATP.

This sequence belongs to the class-I aminoacyl-tRNA synthetase family. GluQ subfamily. Zn(2+) serves as cofactor.

In terms of biological role, catalyzes the tRNA-independent activation of glutamate in presence of ATP and the subsequent transfer of glutamate onto a tRNA(Asp). Glutamate is transferred on the 2-amino-5-(4,5-dihydroxy-2-cyclopenten-1-yl) moiety of the queuosine in the wobble position of the QUC anticodon. This is Glutamyl-Q tRNA(Asp) synthetase from Pseudomonas aeruginosa (strain LESB58).